A 492-amino-acid chain; its full sequence is MDPFPLVAAALFIAATWFITFKRRRNLPPGPFPYPIVGNMLQLGSQPHETFAKLSKKYGPLMSIHLGSLYTVIISSPEMAKEIMHKYGQVFSGRTIAQAVHACDHDKISMGFLPVGAEWRDMRKICKEQMFSHQSMEDSQNLRKQKLQQLLEYAQKCSEEGRGIDIREAAFITTLNLMSATLFSMQATEFDSKVTMEFKEIIEGVASIVGVPNFADYFPILRPFDPQGVKRRADVYFGRLLGLIEGYLNERIEFRKANPNAPKKDDFLETLVDALDAKDYKLKTEHLTHLMLDLFVGGSETSTTEIEWIMWELLASPEKMAKVKAELKSVMGGEKVVDESMMPRLPYLQAVVKESMRLHPPGPLLLPRKAESDQVVNGYLIPKGAQVLINAWAMGRDPSLWKNPDSFEPERFLDQKIDFKGTDYELIPFGSGRRVCPGMPLANRILHTVTATLVHNFDWKLERPEASDAHKGVLFGFAVRRAVPLKIVPIKA.

A helical membrane pass occupies residues 1–21; sequence MDPFPLVAAALFIAATWFITF. C436 provides a ligand contact to heme.

Belongs to the cytochrome P450 family. Requires heme as cofactor. As to expression, expressed in leaf glandular trichomes.

Its subcellular location is the membrane. The enzyme catalyses abieta-8,11,13-triene + reduced [NADPH--hemoprotein reductase] + O2 = ferruginol + oxidized [NADPH--hemoprotein reductase] + H2O + H(+). The catalysed reaction is ferruginol + reduced [NADPH--hemoprotein reductase] + O2 = 11-hydroxyferruginol + oxidized [NADPH--hemoprotein reductase] + H2O + H(+). It catalyses the reaction miltiradiene + 2 reduced [NADPH--hemoprotein reductase] + 2 O2 = 11-oxomiltiradiene + 2 oxidized [NADPH--hemoprotein reductase] + 3 H2O + 2 H(+). Its pathway is secondary metabolite biosynthesis; terpenoid biosynthesis. Its function is as follows. Monooxygenase involved in the biosynthesis of labdane-related diterpenes natural products. Catalyzes the oxidation of abietatriene to produce ferruginol. Catalyzes the oxidation of ferruginol at C-12 to produce 11-hydroxyferruginol. Ferruginol and 11-hydroxyferruginol are intermediates in the biosynthesis of carnosate, a potent antioxidant. May also convert miltiradiene into 11-oxomiltiradiene. The chain is Ferruginol synthase from Salvia fruticosa (Greek sage).